A 998-amino-acid chain; its full sequence is RNA-directed RNA polymerase (998 aa).

Interaction with host mitochondria outer membrane stretches follow at residues 1–67 and 233–250; these read MTLK…DKTK and VRTSWKEWFLQLPLRMIG. The interval 1 to 400 is homomultimerization; sequence MTLKVILGEH…KPTMPRVHWP (400 aa). Residues 17–34 traverse the membrane as a helical segment; that stretch reads LLVGIATVSGCGAVVYCI. The segment at 35–998 is cytoplasmic; that stretch reads SKFWGYGAIA…AQPQPSNNRK (964 aa). The capping stretch occupies residues 91 to 282; sequence NGHAVSGAVR…LVYTIPQYVI (192 aa). The active-site For RdRp/TNTase activity is Asp692. The interval 700–800 is homomultimerization; the sequence is IQKSINRAAK…MVLRLYGPTA (101 aa). The segment at 901–998 is disordered; it reads AKQTRANPGT…AQPQPSNNRK (98 aa). Polar residues-rich tracts occupy residues 904–913 and 947–961; these read TRANPGTSRP and GKTNGKSDGNITAGE. Residues 971-984 show a composition bias toward basic residues; sequence KGPRGGKTNTRRTP.

It belongs to the nodaviridae RNA polymerase family. As to quaternary structure, homododecamer. Forms 2 stacked rings of 35-nm in diameter, arranged in a crown-like structure at the opening of virus-induced replication vesicles. Interacts with protein B2. It depends on Mn(2+) as a cofactor.

It localises to the host mitochondrion outer membrane. It carries out the reaction RNA(n) + a ribonucleoside 5'-triphosphate = RNA(n+1) + diphosphate. Its activity is regulated as follows. Drastically inhibited by phosphonoacetic acid. Only slightly inhibited by gliotoxin. Its function is as follows. RNA-dependent RNA polymerase, which replicates the viral genome composed of 2 RNA segments, RNA1 and RNA2. Does not need an exogenous primer. Also possesses a terminal nucleotidyl transferase (TNTase) activity. The TNTase catalyzes the addition of nucleotide to the 3'-end of plus- and minus-stranded RNAs, probably to repair the 3'-end nucleotide loss. Forms the open necked connection to the cytosol of the virus-induced replication vesicles. Mediates viral RNA1 recruitment. In Costelytra zealandica (Greater wax moth), this protein is RNA-directed RNA polymerase.